The primary structure comprises 110 residues: Nucleotide-binding protein HI1146 homolog (110 aa).

It belongs to the RapZ-like family.

In terms of biological role, displays ATPase and GTPase activities. The chain is Nucleotide-binding protein HI1146 homolog from Aggregatibacter actinomycetemcomitans (Actinobacillus actinomycetemcomitans).